The chain runs to 804 residues: Probable phosphoketolase (804 aa).

It belongs to the XFP family. It depends on thiamine diphosphate as a cofactor.

The polypeptide is Probable phosphoketolase (Mycobacterium avium (strain 104)).